The following is a 382-amino-acid chain: Galactokinase (382 aa).

Residue 34–37 (EHTD) participates in substrate binding. 124–130 (GAGLSSS) contributes to the ATP binding site. Mg(2+) is bound by residues serine 130 and glutamate 162. Aspartate 174 functions as the Proton acceptor in the catalytic mechanism. Tyrosine 223 is a binding site for substrate.

It belongs to the GHMP kinase family. GalK subfamily.

The protein resides in the cytoplasm. It carries out the reaction alpha-D-galactose + ATP = alpha-D-galactose 1-phosphate + ADP + H(+). Its pathway is carbohydrate metabolism; galactose metabolism. In terms of biological role, catalyzes the transfer of the gamma-phosphate of ATP to D-galactose to form alpha-D-galactose-1-phosphate (Gal-1-P). This is Galactokinase from Salmonella paratyphi C (strain RKS4594).